A 173-amino-acid chain; its full sequence is DNA-directed RNA polymerase subunit delta (173 aa).

One can recognise an HTH HARE-type domain in the interval 14 to 81; sequence MALVEIAHEL…SDQTWGLRSW (68 aa). The disordered stretch occupies residues 110–173; sequence LDLDEFEEID…DYDDEEEEIK (64 aa).

The protein belongs to the RpoE family. RNAP is composed of a core of 2 alpha, a beta and a beta' subunit. The core is associated with a delta subunit, and at least one of epsilon or omega. When a sigma factor is associated with the core the holoenzyme is formed, which can initiate transcription.

Participates in both the initiation and recycling phases of transcription. In the presence of the delta subunit, RNAP displays an increased specificity of transcription, a decreased affinity for nucleic acids, and an increased efficiency of RNA synthesis because of enhanced recycling. May function in sigma factor switching. It displaces RNA bound to RNA polymerase in a binary complex. This is DNA-directed RNA polymerase subunit delta from Bacillus subtilis (strain 168).